The following is a 413-amino-acid chain: Zinc finger protein 821 (413 aa).

The segment at 26 to 83 (RQAMMKTDFPGDLGSQRQAIQQLRDQDSSSSDSEGDEEETTQDEVSSHTSEEDGGVVK) is disordered. Residues 58–67 (SEGDEEETTQ) are compositionally biased toward acidic residues. 2 C2H2-type zinc fingers span residues 117 to 141 (QLCQ…VYQH) and 151 to 173 (YMCP…LLIH). Positions 260-367 (ALRRQNEPLE…EKMDMMLRAQ (108 aa)) form a coiled coil. The segment at 279-320 (RTAKKSRRDNETPEEREVRRMRDREAKRLQRMQETDEQRARR) is disordered.

Belongs to the krueppel C2H2-type zinc-finger protein family.

The protein localises to the nucleus. Its function is as follows. May be involved in transcriptional regulation. The sequence is that of Zinc finger protein 821 (Znf821) from Mus musculus (Mouse).